A 159-amino-acid polypeptide reads, in one-letter code: 3-hydroxyacyl-[acyl-carrier-protein] dehydratase FabZ (159 aa).

Residue His-58 is part of the active site.

This sequence belongs to the thioester dehydratase family. FabZ subfamily.

It is found in the cytoplasm. The enzyme catalyses a (3R)-hydroxyacyl-[ACP] = a (2E)-enoyl-[ACP] + H2O. Its function is as follows. Involved in unsaturated fatty acids biosynthesis. Catalyzes the dehydration of short chain beta-hydroxyacyl-ACPs and long chain saturated and unsaturated beta-hydroxyacyl-ACPs. The polypeptide is 3-hydroxyacyl-[acyl-carrier-protein] dehydratase FabZ (Helicobacter pylori (strain J99 / ATCC 700824) (Campylobacter pylori J99)).